Consider the following 131-residue polypeptide: uncharacterized protein (131 aa).

Residues 13–32 (TYSPLPEPPPTPALGGQRGP) form a disordered region.

This is an uncharacterized protein from Homo sapiens (Human).